The following is a 188-amino-acid chain: dCTP deaminase (188 aa).

Residues 111–116, 135–137, Gln156, Tyr170, and Gln180 contribute to the dCTP site; these read KSTYAR and TLE. Glu137 acts as the Proton donor/acceptor in catalysis.

This sequence belongs to the dCTP deaminase family. In terms of assembly, homotrimer.

It carries out the reaction dCTP + H2O + H(+) = dUTP + NH4(+). It participates in pyrimidine metabolism; dUMP biosynthesis; dUMP from dCTP (dUTP route): step 1/2. Functionally, catalyzes the deamination of dCTP to dUTP. The protein is dCTP deaminase of Acidithiobacillus ferrooxidans (strain ATCC 23270 / DSM 14882 / CIP 104768 / NCIMB 8455) (Ferrobacillus ferrooxidans (strain ATCC 23270)).